Here is a 247-residue protein sequence, read N- to C-terminus: MVLIKRYFIKKAMVQTQIDEYLAKRFYRAGYAGVQIIQFPLGTRVIIYAERPAMIIGRRGETIRQLAAIFEHEFGLSNPQITVRRVENPDLNARVVASRIAVLLERGAYYRRVANVMARRVLNAGAIGVQIVISGKLRTERARYEKVRRGKVYTTGHQVEYMVDRAVMHVTLKPGVLGIEVMIVKPAKPSDYVRIKQPEEVKEFIEQVRSELEKARAAEAAAAVAQQGEVVGEAPNTPLEEQGQKQG.

The KH type-2 domain maps to 18-87 (IDEYLAKRFY…NPQITVRRVE (70 aa)). The interval 226–247 (QQGEVVGEAPNTPLEEQGQKQG) is disordered.

Belongs to the universal ribosomal protein uS3 family. In terms of assembly, part of the 30S ribosomal subunit.

In terms of biological role, binds the lower part of the 30S subunit head. The chain is Small ribosomal subunit protein uS3 from Hyperthermus butylicus (strain DSM 5456 / JCM 9403 / PLM1-5).